The following is a 215-amino-acid chain: Cytochrome b6 (215 aa).

The chain crosses the membrane as a helical span at residues 32–52 (IFYCLGGITLTCFLVQVATGF). Residue Cys-35 coordinates heme c. Residues His-86 and His-100 each coordinate heme b. 3 consecutive transmembrane segments (helical) span residues 90–110 (ASMM…TGGF), 116–136 (LTWV…VTGY), and 186–206 (LHTF…FLMI). Residues His-187 and His-202 each contribute to the heme b site.

The protein belongs to the cytochrome b family. PetB subfamily. The 4 large subunits of the cytochrome b6-f complex are cytochrome b6, subunit IV (17 kDa polypeptide, PetD), cytochrome f and the Rieske protein, while the 4 small subunits are PetG, PetL, PetM and PetN. The complex functions as a dimer. It depends on heme b as a cofactor. Heme c serves as cofactor.

It localises to the plastid. The protein localises to the chloroplast thylakoid membrane. Functionally, component of the cytochrome b6-f complex, which mediates electron transfer between photosystem II (PSII) and photosystem I (PSI), cyclic electron flow around PSI, and state transitions. The protein is Cytochrome b6 of Pisum sativum (Garden pea).